A 342-amino-acid chain; its full sequence is Uroporphyrinogen decarboxylase (342 aa).

Substrate-binding positions include 24 to 28, aspartate 74, tyrosine 151, serine 206, and histidine 322; that span reads RQAGR.

This sequence belongs to the uroporphyrinogen decarboxylase family. In terms of assembly, homodimer.

The protein localises to the cytoplasm. It carries out the reaction uroporphyrinogen III + 4 H(+) = coproporphyrinogen III + 4 CO2. It participates in porphyrin-containing compound metabolism; protoporphyrin-IX biosynthesis; coproporphyrinogen-III from 5-aminolevulinate: step 4/4. Functionally, catalyzes the decarboxylation of four acetate groups of uroporphyrinogen-III to yield coproporphyrinogen-III. This is Uroporphyrinogen decarboxylase from Paracoccus denitrificans (strain Pd 1222).